The chain runs to 338 residues: Porphobilinogen deaminase (338 aa).

Cys265 is subject to S-(dipyrrolylmethanemethyl)cysteine.

The protein belongs to the HMBS family. It depends on dipyrromethane as a cofactor.

It catalyses the reaction 4 porphobilinogen + H2O = hydroxymethylbilane + 4 NH4(+). It functions in the pathway porphyrin-containing compound metabolism; protoporphyrin-IX biosynthesis; coproporphyrinogen-III from 5-aminolevulinate: step 2/4. Functionally, tetrapolymerization of the monopyrrole PBG into the hydroxymethylbilane pre-uroporphyrinogen in several discrete steps. In Yarrowia lipolytica (strain CLIB 122 / E 150) (Yeast), this protein is Porphobilinogen deaminase (HEM3).